The sequence spans 89 residues: Chromosomal protein MC1a (89 aa).

Functionally, protects DNA against thermal denaturation and modulates transcription. This is Chromosomal protein MC1a from Methanothrix soehngenii (Methanosaeta concilii).